The primary structure comprises 316 residues: Malate dehydrogenase 2 (316 aa).

Residues 10 to 15 (GGGQIG) and Asp-34 contribute to the NAD(+) site. 2 residues coordinate substrate: Arg-83 and Arg-89. NAD(+) contacts are provided by residues Asn-96 and 119–121 (ISN). Residues Asn-121 and Arg-152 each coordinate substrate. Catalysis depends on His-176, which acts as the Proton acceptor.

It belongs to the LDH/MDH superfamily. MDH type 3 family.

The catalysed reaction is (S)-malate + NAD(+) = oxaloacetate + NADH + H(+). In terms of biological role, catalyzes the reversible oxidation of malate to oxaloacetate. This is Malate dehydrogenase 2 from Anaeromyxobacter dehalogenans (strain 2CP-C).